Here is a 123-residue protein sequence, read N- to C-terminus: Small ribosomal subunit protein uS12 (123 aa).

D89 is subject to 3-methylthioaspartic acid.

It belongs to the universal ribosomal protein uS12 family. Part of the 30S ribosomal subunit. Contacts proteins S8 and S17. May interact with IF1 in the 30S initiation complex.

In terms of biological role, with S4 and S5 plays an important role in translational accuracy. Interacts with and stabilizes bases of the 16S rRNA that are involved in tRNA selection in the A site and with the mRNA backbone. Located at the interface of the 30S and 50S subunits, it traverses the body of the 30S subunit contacting proteins on the other side and probably holding the rRNA structure together. The combined cluster of proteins S8, S12 and S17 appears to hold together the shoulder and platform of the 30S subunit. This chain is Small ribosomal subunit protein uS12, found in Anaeromyxobacter dehalogenans (strain 2CP-1 / ATCC BAA-258).